Consider the following 234-residue polypeptide: Ubiquinone biosynthesis O-methyltransferase (234 aa).

4 residues coordinate S-adenosyl-L-methionine: R40, G59, D80, and M123.

The protein belongs to the methyltransferase superfamily. UbiG/COQ3 family.

The catalysed reaction is a 3-demethylubiquinol + S-adenosyl-L-methionine = a ubiquinol + S-adenosyl-L-homocysteine + H(+). It catalyses the reaction a 3-(all-trans-polyprenyl)benzene-1,2-diol + S-adenosyl-L-methionine = a 2-methoxy-6-(all-trans-polyprenyl)phenol + S-adenosyl-L-homocysteine + H(+). It participates in cofactor biosynthesis; ubiquinone biosynthesis. Its function is as follows. O-methyltransferase that catalyzes the 2 O-methylation steps in the ubiquinone biosynthetic pathway. The chain is Ubiquinone biosynthesis O-methyltransferase from Coxiella burnetii (strain CbuK_Q154) (Coxiella burnetii (strain Q154)).